We begin with the raw amino-acid sequence, 443 residues long: Glucose-6-phosphate isomerase (443 aa).

Glutamate 285 acts as the Proton donor in catalysis. Active-site residues include histidine 306 and lysine 420.

The protein belongs to the GPI family.

It localises to the cytoplasm. The catalysed reaction is alpha-D-glucose 6-phosphate = beta-D-fructose 6-phosphate. It functions in the pathway carbohydrate biosynthesis; gluconeogenesis. Its pathway is carbohydrate degradation; glycolysis; D-glyceraldehyde 3-phosphate and glycerone phosphate from D-glucose: step 2/4. Catalyzes the reversible isomerization of glucose-6-phosphate to fructose-6-phosphate. The chain is Glucose-6-phosphate isomerase from Staphylococcus epidermidis (strain ATCC 12228 / FDA PCI 1200).